Here is a 425-residue protein sequence, read N- to C-terminus: MKVLVVGNGGREHALAWKLLQSPQIEQVACVPGNGGTATLARCQNVSLAVDDFEGISQYALNQGFSLVVVGPEVPLAKGITDYLQEKGLMVFGPSRAGAQIEASKAWAKALMQEAGIPTAKAAVFTEAAAAKSYIQAQGAPIVVKADGLAAGKGVTVATTIEQAQSAIDAIFQGQFGSAGEFVVIEECLTGQEVSVLALTDGLTIRPLLPAQDHKRIGEGDTGENTGGMGAYAPAPIATPELMALVQTEVLERAIATLQSKGIDYRGVLYAGLMITPNGDFKVLEFNCRFGDPETQVILPLLATPLEELILACVQQRLGELPPIAWQGGASATVVAASGGYPGDYEKGQVITGIPQAEATGATVFHAGTKLNAQQQIVTDGGRVLNVTGIGENFQQALAQAYTGIKAIDFSGIYYRRDIGYRVNS.

Residues 109–315 (KALMQEAGIP…LEELILACVQ (207 aa)) enclose the ATP-grasp domain. 135–195 (IQAQGAPIVV…EECLTGQEVS (61 aa)) provides a ligand contact to ATP. Residues E285 and N287 each contribute to the Mg(2+) site.

This sequence belongs to the GARS family. Mg(2+) is required as a cofactor. The cofactor is Mn(2+).

The catalysed reaction is 5-phospho-beta-D-ribosylamine + glycine + ATP = N(1)-(5-phospho-beta-D-ribosyl)glycinamide + ADP + phosphate + H(+). It functions in the pathway purine metabolism; IMP biosynthesis via de novo pathway; N(1)-(5-phospho-D-ribosyl)glycinamide from 5-phospho-alpha-D-ribose 1-diphosphate: step 2/2. This is Phosphoribosylamine--glycine ligase from Nostoc sp. (strain PCC 7120 / SAG 25.82 / UTEX 2576).